Here is a 93-residue protein sequence, read N- to C-terminus: Molybdopterin synthase sulfur carrier subunit (93 aa).

Gly-93 is subject to 1-thioglycine; alternate. Gly-93 is subject to Glycyl adenylate; alternate.

This sequence belongs to the MoaD family. MOCS2A subfamily. Heterotetramer; composed of 2 small (MOCS2A) and 2 large (MOCS2B) subunits. C-terminal thiocarboxylation occurs in 2 steps, it is first acyl-adenylated (-COAMP) via the hesA/moeB/thiF part of uba4, then thiocarboxylated (-COSH) via the rhodanese domain of uba4.

It is found in the cytoplasm. It participates in cofactor biosynthesis; molybdopterin biosynthesis. In terms of biological role, acts as a sulfur carrier required for molybdopterin biosynthesis. Component of the molybdopterin synthase complex that catalyzes the conversion of precursor Z into molybdopterin by mediating the incorporation of 2 sulfur atoms into precursor Z to generate a dithiolene group. In the complex, serves as sulfur donor by being thiocarboxylated (-COSH) at its C-terminus by uba4. After interaction with MOCS2B, the sulfur is then transferred to precursor Z to form molybdopterin. In Pyrenophora tritici-repentis (strain Pt-1C-BFP) (Wheat tan spot fungus), this protein is Molybdopterin synthase sulfur carrier subunit.